A 449-amino-acid chain; its full sequence is Sensor protein QseC (449 aa).

Residues 1-12 lie on the Cytoplasmic side of the membrane; the sequence is MKLTQRLSLRVR. The chain crosses the membrane as a helical span at residues 13–33; the sequence is LTLIFLILVSITWAISSFVAW. At 34–161 the chain is on the periplasmic side; that stretch reads RKTTDNVDEL…REDMALAIVA (128 aa). The helical transmembrane segment at 162–182 threads the bilayer; the sequence is AQLTPWLIALPFMLLILLLLL. Residues 183–235 enclose the HAMP domain; that stretch reads HRELRPLKKLAQALRFRSPESETPLDAKGVPSEVRPLVEALNQLFSRIHSMMV. Over 183-449 the chain is Cytoplasmic; the sequence is HRELRPLKKL…EGGFEAVVSW (267 aa). A Histidine kinase domain is found at 243-449; that stretch reads DAAHELRSPL…EGGFEAVVSW (207 aa). His246 bears the Phosphohistidine; by autocatalysis mark.

The protein localises to the cell inner membrane. The enzyme catalyses ATP + protein L-histidine = ADP + protein N-phospho-L-histidine.. Functionally, member of a two-component regulatory system QseB/QseC. Activates the flagella regulon by activating transcription of FlhDC. May activate QseB by phosphorylation. The sequence is that of Sensor protein QseC (qseC) from Salmonella typhimurium (strain LT2 / SGSC1412 / ATCC 700720).